Here is a 240-residue protein sequence, read N- to C-terminus: Uridylate kinase (240 aa).

K14–G17 serves as a coordination point for ATP. G56 serves as a coordination point for UMP. ATP-binding residues include G57 and R61. UMP-binding positions include D76 and T137 to T144. 3 residues coordinate ATP: T164, Y170, and D173.

It belongs to the UMP kinase family. Homohexamer.

The protein resides in the cytoplasm. The enzyme catalyses UMP + ATP = UDP + ADP. It functions in the pathway pyrimidine metabolism; CTP biosynthesis via de novo pathway; UDP from UMP (UMPK route): step 1/1. Inhibited by UTP. Catalyzes the reversible phosphorylation of UMP to UDP. The protein is Uridylate kinase of Albidiferax ferrireducens (strain ATCC BAA-621 / DSM 15236 / T118) (Rhodoferax ferrireducens).